We begin with the raw amino-acid sequence, 194 residues long: MILMIDNYDSFTYNLVQYLGELGEELVVKRNDSITIDEIEELSPDFLMISPGPCSPDEAGISLEAIKHFAGKIPIFGVCLGHQSIAQVFGGDVVRAERLMHGKTSDIEHDGKTIFEGLKNPLVATRYHSLIVKPETLPSCFTVTAQTKEGEIMAIRHNDLPIEGVQFHPESIMTSFGKEMLRNFIETYRKEVIA.

The Glutamine amidotransferase type-1 domain maps to 1–194 (MILMIDNYDS…IETYRKEVIA (194 aa)). Residues cysteine 79, histidine 168, and glutamate 170 contribute to the active site.

In terms of assembly, monomer. Heterodimer consisting of two non-identical subunits: a glutamine amidotransferase subunit (PabA) and a aminodeoxychorismate synthase subunit (PabB).

The enzyme catalyses chorismate + L-glutamine = anthranilate + pyruvate + L-glutamate + H(+). The catalysed reaction is chorismate + L-glutamine = 4-amino-4-deoxychorismate + L-glutamate. Its pathway is amino-acid biosynthesis; L-tryptophan biosynthesis; L-tryptophan from chorismate: step 1/5. The protein operates within cofactor biosynthesis; tetrahydrofolate biosynthesis; 4-aminobenzoate from chorismate: step 1/2. Functionally, part of a heterodimeric complex that catalyzes the two-step biosynthesis of 4-amino-4-deoxychorismate (ADC), a precursor of p-aminobenzoate (PABA) and tetrahydrofolate. In the first step, a glutamine amidotransferase (PabA) generates ammonia as a substrate that, along with chorismate, is used in the second step, catalyzed by aminodeoxychorismate synthase (PabB) to produce ADC. PabA converts glutamine into glutamate only in the presence of stoichiometric amounts of PabB. Also involved in the biosynthesis of anthranilate. Complements a glutamine amidotransferase-negative mutant. The protein is Aminodeoxychorismate/anthranilate synthase component 2 of Bacillus subtilis (strain 168).